The primary structure comprises 148 residues: Protein ORM1 (148 aa).

Helical transmembrane passes span 12–32 (WIIH…FPGV), 36–56 (WSWT…FHLI), 89–109 (FLII…HYDL), and 111–131 (MFSW…LPVT).

This sequence to yeast YLR350W C-terminus.

It is found in the membrane. The protein is Protein ORM1 (ORM1) of Saccharomyces pastorianus (strain ATCC 76670 / Carlsberg bottom yeast no.2 / CBS 1503 / CLIB 180 / NBRC 10610 / NRRL Y-1525) (Saaz-type lager yeast).